The chain runs to 95 residues: Protein TRACHEARY ELEMENT DIFFERENTIATION-RELATED 6 (95 aa).

At 1 to 3 (MAT) the chain is on the extracellular side. A helical membrane pass occupies residues 4 to 24 (IFIVFVSFGCVFVLGIAAFVL). The Cytoplasmic portion of the chain corresponds to 25–95 (CCLIKKWKCS…KLGTASTSKA (71 aa)).

As to quaternary structure, interacts with the secondary cell wall (SCW)-related cellulose synthase complex. In terms of tissue distribution, accumulates in cells differentiating into tracheary element (TE) which undergo secondary cell wall (SCW) formation.

Its subcellular location is the cell membrane. The protein localises to the secreted. It localises to the cell wall. Functionally, involved in the secondary cell wall (SCW) formation of vessel elements (e.g. protoxylem and metaxylem), thus promoting tracheary element (TE) differentiation. The polypeptide is Protein TRACHEARY ELEMENT DIFFERENTIATION-RELATED 6 (Zinnia elegans (Garden zinnia)).